The primary structure comprises 418 residues: MIFDKDDFKAYDADLWNAIAKEEERQQNNIELIASENVVSKAVMAAQGSILTNKYAEGYPGRRYYGGTDVVDVVETLAIERAKEIFGAKFANVQPHSGSQANCAAYMSLIEPGDTVMGMDLASGGHLTHGAPVSFSGQTYNFVSYSVDPKTELLDFDAILKQAQEVKPKLIVAGASAYSQIIDFSKFREIADAVGAKLMVDMAHIAGLVAAGLHPSPVPYAHITTTTTHKTLRGPRGGLILTNDEELAKKINSAIFPGIQGGPLEHVVAAKAVSFKEVLDPAFKEYAANVIKNSKAMADVFLQDPDFRIISGGTENHLFLVDVTKVVENGKVAQNLLDEVNITLNKNSIPYETLSPFKTSGIRIGAAAITAREFGEEESRKVAELIIKTLKNSENEAVLEEVRSAVKELTDAFPLYEE.

Residues Leu121 and 125 to 127 (GHL) contribute to the (6S)-5,6,7,8-tetrahydrofolate site. The residue at position 230 (Lys230) is an N6-(pyridoxal phosphate)lysine. (6S)-5,6,7,8-tetrahydrofolate contacts are provided by residues Glu246 and 355–357 (SPF).

It belongs to the SHMT family. As to quaternary structure, homodimer. It depends on pyridoxal 5'-phosphate as a cofactor.

The protein localises to the cytoplasm. The enzyme catalyses (6R)-5,10-methylene-5,6,7,8-tetrahydrofolate + glycine + H2O = (6S)-5,6,7,8-tetrahydrofolate + L-serine. Its pathway is one-carbon metabolism; tetrahydrofolate interconversion. It participates in amino-acid biosynthesis; glycine biosynthesis; glycine from L-serine: step 1/1. Functionally, catalyzes the reversible interconversion of serine and glycine with tetrahydrofolate (THF) serving as the one-carbon carrier. This reaction serves as the major source of one-carbon groups required for the biosynthesis of purines, thymidylate, methionine, and other important biomolecules. Also exhibits THF-independent aldolase activity toward beta-hydroxyamino acids, producing glycine and aldehydes, via a retro-aldol mechanism. This chain is Serine hydroxymethyltransferase, found in Streptococcus pneumoniae (strain 70585).